Here is a 404-residue protein sequence, read N- to C-terminus: Keratin, type I cuticular Ha3-II (404 aa).

A head region spans residues 1–56 (MPYNFCLPSLSCRTSCSSRPCVPPSCHGYTLPGACNIPANVSNCNWFCEGSFNGSE). One can recognise an IF rod domain in the interval 56 to 367 (EKETMQFLND…SLLESEDCKL (312 aa)). Residues 57–91 (KETMQFLNDRLASYLEKVRQLERDNAELENLIRER) form a coil 1A region. The interval 92–102 (SQQQEPLLCPS) is linker 1. The coil 1B stretch occupies residues 103 to 203 (YQSYFKTIEE…HEQEVNTLRC (101 aa)). The interval 204 to 219 (QLGDRLNVEVDAAPAV) is linker 12. Positions 220–363 (DLNQVLNETR…NTYRSLLESE (144 aa)) are coil 2. The segment at 364-404 (DCKLPSNPCATTNACEKPIGSCVTNPCGPRSRCGPCNTFGY) is tail.

It belongs to the intermediate filament family.

The chain is Keratin, type I cuticular Ha3-II (KRT33B) from Homo sapiens (Human).